We begin with the raw amino-acid sequence, 618 residues long: Sodium/iodide cotransporter (618 aa).

The Extracellular segment spans residues 1-14; that stretch reads MEGAEAGARATFGP. A helical membrane pass occupies residues 15-31; that stretch reads WDYGVFATMLLVSTGIG. The Cytoplasmic portion of the chain corresponds to 32-56; sequence LWVGLARGGQRSADDFFTGGRQLAA. The discontinuously helical transmembrane segment at 57-80 threads the bilayer; the sequence is VPVGLSLAASFMSAVQVLGVPAEA. Na(+) contacts are provided by Ser-69, Val-71, and Gln-72. Position 76 (Val-76) interacts with iodide. Topologically, residues 81–84 are extracellular; it reads ARYG. The chain crosses the membrane as a helical span at residues 85 to 105; that stretch reads LKFLWMCVGQLLNSLLTALLF. Met-90 is a binding site for iodide. The Cytoplasmic segment spans residues 106-130; it reads LPIFYRLGLTSTYQYLELRFSRAVR. Residues 131-157 traverse the membrane as a helical segment; it reads LCGTLQYLVATMLYTGIVIYAPALILN. Position 144 (Tyr-144) interacts with Na(+). Residues 158-163 lie on the Extracellular side of the membrane; sequence QVTGLD. Residues 164-181 traverse the membrane as a helical segment; the sequence is IWASLLSTGIICTLYTTV. Topologically, residues 182 to 189 are cytoplasmic; sequence GGMKAVVW. A helical transmembrane segment spans residues 190-208; it reads TDVFQVVVMLVGFWVILAR. Over 209–243 the chain is Extracellular; it reads GVMLMGGPWNVLSLAQNHSRINLMDFDPDPRSRYT. The chain crosses the membrane as a discontinuously helical span at residues 244 to 266; sequence FWTFVVGGSLVWLSMYGVNQAQV. Trp-255 serves as a coordination point for iodide. Met-258 provides a ligand contact to Na(+). The Cytoplasmic portion of the chain corresponds to 267 to 278; that stretch reads QRYVACHTERKA. Residues 279–301 form a helical membrane-spanning segment; that stretch reads KLALLVNQLGLFLIVASAACCGI. Residues 302-335 are Extracellular-facing; the sequence is VMFVYYKDCDPLLTGRIAAPDQYMPLLVLDIFED. The helical transmembrane segment at 336–363 threads the bilayer; that stretch reads LPGVPGLFLACAYSGTLSTASTSINAMA. The Cytoplasmic portion of the chain corresponds to 364–386; it reads AVTVEDLIKPRMPSLAPRKLVFI. A helical transmembrane segment spans residues 387 to 408; the sequence is SKGLSFIYGSTCLTVAALSSLL. Residues 409 to 411 are Extracellular-facing; sequence GGG. A helical membrane pass occupies residues 412 to 437; sequence VLQGSFTVMGVISGPLLGAFTLGMLL. Leu-413 contributes to the iodide binding site. The Na(+) site is built by Ser-416 and Phe-417. Phe-417 lines the iodide pocket. Residues 438–441 are Cytoplasmic-facing; that stretch reads PACN. Residues 442-465 traverse the membrane as a helical segment; that stretch reads TPGVLSGLTAGLAVSLWVAVGATL. The Extracellular segment spans residues 466 to 520; the sequence is YPPGEQTMGVLPTSAAGCTNASVLPSPPGAANTSRGIPSSGMDSGRPAFADTFYA. N-linked (GlcNAc...) asparagine glycosylation is found at Asn-485 and Asn-497. The helical transmembrane segment at 521–545 threads the bilayer; it reads VSYLYYGALGTLTTMLCGALISYLT. Over 546-618 the chain is Cytoplasmic; that stretch reads GPTKRSSLGP…YLGHDVETNL (73 aa). Ser-551 bears the Phosphoserine; by PKA mark. Residues 571–587 show a composition bias toward basic and acidic residues; the sequence is PKEDTTTLEDSLVKGPE. Residues 571–618 are disordered; it reads PKEDTTTLEDSLVKGPEDIPAATKKPPGFRPEAETHPLYLGHDVETNL.

This sequence belongs to the sodium:solute symporter (SSF) (TC 2.A.21) family. In terms of assembly, monomer. Glycosylated.

The protein resides in the cell membrane. It is found in the cytoplasm. The enzyme catalyses iodide(out) + 2 Na(+)(out) = iodide(in) + 2 Na(+)(in). It catalyses the reaction chlorate(out) + 2 Na(+)(out) = chlorate(in) + 2 Na(+)(in). The catalysed reaction is thiocyanate(out) + 2 Na(+)(out) = thiocyanate(in) + 2 Na(+)(in). It carries out the reaction nitrate(out) + 2 Na(+)(out) = nitrate(in) + 2 Na(+)(in). The enzyme catalyses selenocyanate(out) + 2 Na(+)(out) = selenocyanate(in) + 2 Na(+)(in). With respect to regulation, perchlorate inhibits iodide transport activity. Oxyanions inhibit iodide transport activity by blocking the binding sites for iodide and one of the sodium ions. Functionally, sodium:iodide symporter that mediates the transport of iodide into the thyroid gland. Can also mediate the transport of chlorate, thiocynate, nitrate and selenocynate. In Mus musculus (Mouse), this protein is Sodium/iodide cotransporter (Slc5a5).